A 151-amino-acid chain; its full sequence is Transcriptional repressor NrdR (151 aa).

Residues 3–34 fold into a zinc finger; it reads CPFCSHPDTQVVETREAEDGGFIRRRRQCGGC. Residues 49–139 enclose the ATP-cone domain; sequence PAIVKKDGRR…VYRSFEDVDD (91 aa).

This sequence belongs to the NrdR family. Zn(2+) is required as a cofactor.

Negatively regulates transcription of bacterial ribonucleotide reductase nrd genes and operons by binding to NrdR-boxes. This is Transcriptional repressor NrdR from Delftia acidovorans (strain DSM 14801 / SPH-1).